A 629-amino-acid polypeptide reads, in one-letter code: tRNA uridine 5-carboxymethylaminomethyl modification enzyme MnmG (629 aa).

FAD is bound by residues 13-18, V125, and S180; that span reads GGGHAG. Residue 273–287 participates in NAD(+) binding; that stretch reads GPRYCPSIEDKVMRF. An FAD-binding site is contributed by Q370.

Belongs to the MnmG family. In terms of assembly, homodimer. Heterotetramer of two MnmE and two MnmG subunits. It depends on FAD as a cofactor.

Its subcellular location is the cytoplasm. Its function is as follows. NAD-binding protein involved in the addition of a carboxymethylaminomethyl (cmnm) group at the wobble position (U34) of certain tRNAs, forming tRNA-cmnm(5)s(2)U34. This is tRNA uridine 5-carboxymethylaminomethyl modification enzyme MnmG from Escherichia coli (strain SMS-3-5 / SECEC).